Consider the following 257-residue polypeptide: Hydroxyethylthiazole kinase (257 aa).

A substrate-binding site is contributed by Met42. 2 residues coordinate ATP: Arg117 and Thr163. Ala190 contacts substrate.

It belongs to the Thz kinase family. Requires Mg(2+) as cofactor.

It catalyses the reaction 5-(2-hydroxyethyl)-4-methylthiazole + ATP = 4-methyl-5-(2-phosphooxyethyl)-thiazole + ADP + H(+). The protein operates within cofactor biosynthesis; thiamine diphosphate biosynthesis; 4-methyl-5-(2-phosphoethyl)-thiazole from 5-(2-hydroxyethyl)-4-methylthiazole: step 1/1. Functionally, catalyzes the phosphorylation of the hydroxyl group of 4-methyl-5-beta-hydroxyethylthiazole (THZ). The sequence is that of Hydroxyethylthiazole kinase from Roseobacter denitrificans (strain ATCC 33942 / OCh 114) (Erythrobacter sp. (strain OCh 114)).